The following is a 459-amino-acid chain: Cysteine--tRNA ligase (459 aa).

Cysteine 28 contacts Zn(2+). The 'HIGH' region signature appears at 30 to 40 (ITVYDLCHVGH). Positions 209, 234, and 238 each coordinate Zn(2+). A 'KMSKS' region motif is present at residues 266-270 (KMSKS). Lysine 269 contributes to the ATP binding site.

Belongs to the class-I aminoacyl-tRNA synthetase family. Monomer. Requires Zn(2+) as cofactor.

The protein localises to the cytoplasm. It catalyses the reaction tRNA(Cys) + L-cysteine + ATP = L-cysteinyl-tRNA(Cys) + AMP + diphosphate. This is Cysteine--tRNA ligase (cysS) from Pasteurella multocida (strain Pm70).